The primary structure comprises 370 residues: tRNA 2-selenouridine synthase (370 aa).

The region spanning 12 to 136 (FLDDVPMMDM…MRTFLLETTQ (125 aa)) is the Rhodanese domain. Cys95 (S-selanylcysteine intermediate) is an active-site residue.

Belongs to the SelU family. As to quaternary structure, monomer.

It carries out the reaction 5-methylaminomethyl-2-thiouridine(34) in tRNA + selenophosphate + (2E)-geranyl diphosphate + H2O + H(+) = 5-methylaminomethyl-2-selenouridine(34) in tRNA + (2E)-thiogeraniol + phosphate + diphosphate. The catalysed reaction is 5-methylaminomethyl-2-thiouridine(34) in tRNA + (2E)-geranyl diphosphate = 5-methylaminomethyl-S-(2E)-geranyl-thiouridine(34) in tRNA + diphosphate. It catalyses the reaction 5-methylaminomethyl-S-(2E)-geranyl-thiouridine(34) in tRNA + selenophosphate + H(+) = 5-methylaminomethyl-2-(Se-phospho)selenouridine(34) in tRNA + (2E)-thiogeraniol. The enzyme catalyses 5-methylaminomethyl-2-(Se-phospho)selenouridine(34) in tRNA + H2O = 5-methylaminomethyl-2-selenouridine(34) in tRNA + phosphate. Involved in the post-transcriptional modification of the uridine at the wobble position (U34) of tRNA(Lys), tRNA(Glu) and tRNA(Gln). Catalyzes the conversion of 2-thiouridine (S2U-RNA) to 2-selenouridine (Se2U-RNA). Acts in a two-step process involving geranylation of 2-thiouridine (S2U) to S-geranyl-2-thiouridine (geS2U) and subsequent selenation of the latter derivative to 2-selenouridine (Se2U) in the tRNA chain. This chain is tRNA 2-selenouridine synthase, found in Pseudomonas putida (strain GB-1).